The sequence spans 406 residues: 8-amino-7-oxononanoate synthase (406 aa).

Arg21 is a binding site for substrate. 112 to 113 (GY) contributes to the pyridoxal 5'-phosphate binding site. His137 is a binding site for substrate. Pyridoxal 5'-phosphate is bound by residues Ser183, His211, and Thr239. Residue Lys242 is modified to N6-(pyridoxal phosphate)lysine. Residue Thr358 coordinates substrate.

Belongs to the class-II pyridoxal-phosphate-dependent aminotransferase family. BioF subfamily. In terms of assembly, homodimer. The cofactor is pyridoxal 5'-phosphate.

The catalysed reaction is 6-carboxyhexanoyl-[ACP] + L-alanine + H(+) = (8S)-8-amino-7-oxononanoate + holo-[ACP] + CO2. It functions in the pathway cofactor biosynthesis; biotin biosynthesis. In terms of biological role, catalyzes the decarboxylative condensation of pimeloyl-[acyl-carrier protein] and L-alanine to produce 8-amino-7-oxononanoate (AON), [acyl-carrier protein], and carbon dioxide. The sequence is that of 8-amino-7-oxononanoate synthase from Burkholderia cenocepacia (strain HI2424).